Reading from the N-terminus, the 392-residue chain is Flagellar P-ring protein (392 aa).

Positions 1 to 38 (MKPFARRALLTAEPIRALLLAASLLAATLGLMPAEAFG) are cleaved as a signal peptide.

This sequence belongs to the FlgI family. As to quaternary structure, the basal body constitutes a major portion of the flagellar organelle and consists of four rings (L,P,S, and M) mounted on a central rod.

Its subcellular location is the periplasm. The protein localises to the bacterial flagellum basal body. Its function is as follows. Assembles around the rod to form the L-ring and probably protects the motor/basal body from shearing forces during rotation. This Paramagnetospirillum magneticum (strain ATCC 700264 / AMB-1) (Magnetospirillum magneticum) protein is Flagellar P-ring protein.